The following is a 353-amino-acid chain: UPF0283 membrane protein YPTS_2342 (353 aa).

3 consecutive transmembrane segments (helical) span residues 71-91 (MVTA…VQWV), 101-121 (IALG…GSVV), and 214-234 (ESAL…FIAW).

Belongs to the UPF0283 family.

Its subcellular location is the cell inner membrane. The protein is UPF0283 membrane protein YPTS_2342 of Yersinia pseudotuberculosis serotype IB (strain PB1/+).